Here is a 190-residue protein sequence, read N- to C-terminus: MPTETTPRFRIRQCAARLQAGGVVAYPTEAVYGLGCDPGDPAAVATLLTLKRRDPGKGLILIASRVSQLSPWLGDAPLPQAVLASWPGPNTWLLPAAPHTPAWITGGRAKVAVRVTAHPVAAALCEAFGGAIVSTSANRDGQPPARSATQVRTRLGAEAAELADILPGPVDRSARPTAIRDAESGAVIRA.

The YrdC-like domain occupies 8 to 190; sequence RFRIRQCAAR…DAESGAVIRA (183 aa).

Belongs to the SUA5 family. TsaC subfamily.

The protein localises to the cytoplasm. It carries out the reaction L-threonine + hydrogencarbonate + ATP = L-threonylcarbamoyladenylate + diphosphate + H2O. Functionally, required for the formation of a threonylcarbamoyl group on adenosine at position 37 (t(6)A37) in tRNAs that read codons beginning with adenine. Catalyzes the conversion of L-threonine, HCO(3)(-)/CO(2) and ATP to give threonylcarbamoyl-AMP (TC-AMP) as the acyladenylate intermediate, with the release of diphosphate. This chain is Threonylcarbamoyl-AMP synthase, found in Alkalilimnicola ehrlichii (strain ATCC BAA-1101 / DSM 17681 / MLHE-1).